Here is a 35-residue protein sequence, read N- to C-terminus: Photosystem II reaction center protein T (35 aa).

Residues 3-23 form a helical membrane-spanning segment; sequence ALVYTFLLVGTLGIIFFAIFF.

This sequence belongs to the PsbT family. In terms of assembly, PSII is composed of 1 copy each of membrane proteins PsbA, PsbB, PsbC, PsbD, PsbE, PsbF, PsbH, PsbI, PsbJ, PsbK, PsbL, PsbM, PsbT, PsbY, PsbZ, Psb30/Ycf12, at least 3 peripheral proteins of the oxygen-evolving complex and a large number of cofactors. It forms dimeric complexes.

The protein localises to the plastid. The protein resides in the chloroplast thylakoid membrane. Its function is as follows. Found at the monomer-monomer interface of the photosystem II (PS II) dimer, plays a role in assembly and dimerization of PSII. PSII is a light-driven water plastoquinone oxidoreductase, using light energy to abstract electrons from H(2)O, generating a proton gradient subsequently used for ATP formation. This is Photosystem II reaction center protein T from Chaetosphaeridium globosum (Charophycean green alga).